A 409-amino-acid chain; its full sequence is MDSNFIFGIGAFTAIVLVLAVVILIAKSKLVDSGDITISINNDPEKAITLPAGGKLLGALASKGIFVSSACGGGGSCGQCKVKVKSGGGEILPTELSHISKKEAKEGWRLSCQVNVKSSMDVELPEEVFGVKKWECTVISNDNKATFIKELKLAIPEGEEVPFRAGGYIQIEAEPHTVNYKDFDIPEEYHEDWDKFNLWRYVSKVDEHIIRAYSMASYPEEKGIIMLNVRIATPPPRNPDVPPGQMSSYIWSLKPGDKVTISGPFGEFFAKDTDAEMVFIGGGAGMAPMRSHIFDQLKRLHSKRKISFWYGARSKREMFYVEDFDQLQAENDNFTWHVALSDPLPEDNWDGYTGFIHNVLYENYLKNHEAPEDCEYYMCGPPVMNAAVINMLESLGVEHENILLDDFGG.

Residues 5–25 form a helical membrane-spanning segment; the sequence is FIFGIGAFTAIVLVLAVVILI. The 2Fe-2S ferredoxin-type domain maps to 34–128; sequence GDITISINND…SMDVELPEEV (95 aa). [2Fe-2S] cluster is bound by residues C71, C77, C80, and C112. The FAD-binding FR-type domain maps to 131 to 271; sequence VKKWECTVIS…SGPFGEFFAK (141 aa).

It belongs to the NqrF family. As to quaternary structure, composed of six subunits; NqrA, NqrB, NqrC, NqrD, NqrE and NqrF. [2Fe-2S] cluster is required as a cofactor. The cofactor is FAD.

It localises to the cell inner membrane. It catalyses the reaction a ubiquinone + n Na(+)(in) + NADH + H(+) = a ubiquinol + n Na(+)(out) + NAD(+). NQR complex catalyzes the reduction of ubiquinone-1 to ubiquinol by two successive reactions, coupled with the transport of Na(+) ions from the cytoplasm to the periplasm. The first step is catalyzed by NqrF, which accepts electrons from NADH and reduces ubiquinone-1 to ubisemiquinone by a one-electron transfer pathway. The protein is Na(+)-translocating NADH-quinone reductase subunit F of Mannheimia succiniciproducens (strain KCTC 0769BP / MBEL55E).